The primary structure comprises 521 residues: Potassium/proton antiporter CemA (521 aa).

The next 5 membrane-spanning stretches (helical) occupy residues 68-88, 294-314, 399-419, 446-466, and 481-501; these read FVFI…LLNI, ALAS…ISFP, ILHL…FISG, ILLL…EILI, and IISC…KYWI.

The protein belongs to the CemA family.

It localises to the plastid. It is found in the chloroplast inner membrane. The enzyme catalyses K(+)(in) + H(+)(out) = K(+)(out) + H(+)(in). In terms of biological role, contributes to K(+)/H(+) antiport activity by supporting proton efflux to control proton extrusion and homeostasis in chloroplasts in a light-dependent manner to modulate photosynthesis. Prevents excessive induction of non-photochemical quenching (NPQ) under continuous-light conditions. Indirectly promotes efficient inorganic carbon uptake into chloroplasts. The protein is Potassium/proton antiporter CemA of Huperzia lucidula (Shining clubmoss).